An 85-amino-acid polypeptide reads, in one-letter code: Large ribosomal subunit protein bL31B (85 aa).

The protein belongs to the bacterial ribosomal protein bL31 family. Type B subfamily. Part of the 50S ribosomal subunit.

The sequence is that of Large ribosomal subunit protein bL31B from Clavibacter michiganensis subsp. michiganensis (strain NCPPB 382).